A 20-amino-acid polypeptide reads, in one-letter code: FLSLIPHAINAVSTLVHHSG.

The residue at position 20 (glycine 20) is a Glycine amide.

Expressed by the skin glands.

It localises to the secreted. In terms of biological role, has antiprotozoal activity against T.cruzi. The chain is Phylloseptin-O1 (psn4) from Pithecopus oreades (Orange-legged leaf frog).